A 428-amino-acid polypeptide reads, in one-letter code: Dihydroorotase (428 aa).

Zn(2+) contacts are provided by His-60 and His-62. Residues 62 to 64 (HLR) and Asn-94 contribute to the substrate site. Residues Asp-152, His-179, and His-232 each coordinate Zn(2+). Asn-278 contacts substrate. Residue Asp-305 participates in Zn(2+) binding. Asp-305 is an active-site residue. A substrate-binding site is contributed by His-309.

It belongs to the metallo-dependent hydrolases superfamily. DHOase family. Class I DHOase subfamily. The cofactor is Zn(2+).

It carries out the reaction (S)-dihydroorotate + H2O = N-carbamoyl-L-aspartate + H(+). It participates in pyrimidine metabolism; UMP biosynthesis via de novo pathway; (S)-dihydroorotate from bicarbonate: step 3/3. In terms of biological role, catalyzes the reversible cyclization of carbamoyl aspartate to dihydroorotate. This Ruminiclostridium cellulolyticum (strain ATCC 35319 / DSM 5812 / JCM 6584 / H10) (Clostridium cellulolyticum) protein is Dihydroorotase.